The chain runs to 1491 residues: CLIP-associating protein (1491 aa).

HEAT repeat units lie at residues 44 to 82, 85 to 123, 163 to 201, and 402 to 440; these read CTDM…RLGS, NAYT…HRVL, QLSV…HVGD, and DAFC…YTHA. 2 disordered regions span residues 537-586 and 600-739; these read RERE…AVDT and LYSR…NNPV. Over residues 542–551 the composition is skewed to gly residues; sequence GGGGGTGTGT. Residues 569–580 show a composition bias toward polar residues; it reads GTLQKPTPSMRS. Phosphoserine occurs at positions 582, 626, and 634. The segment covering 632–646 has biased composition (polar residues); it reads LNSNSGGTPATTPGS. T648 is subject to Phosphothreonine. Polar residues-rich tracts occupy residues 657–671 and 699–712; these read VSQS…SPST and PRST…SPTR. A phosphoserine mark is found at S806, S817, S820, S822, and S824. HEAT repeat units follow at residues 874-912 and 955-993; these read QQQL…VHAN and QLQL…TYCK. Disordered regions lie at residues 1065–1127 and 1167–1205; these read HMRR…SVEQ and GHLQ…ESAT. 3 stretches are compositionally biased toward low complexity: residues 1070–1097, 1111–1124, and 1181–1200; these read SQSC…QSPS, LSIS…RQSS, and ASLS…QSNT. A phosphoserine mark is found at S1120, S1123, and S1124. HEAT repeat units follow at residues 1289-1327 and 1408-1446; these read NKHF…SNKM and DAHL…VLGE.

Belongs to the CLASP family. As to quaternary structure, interacts with CLIP-190 and microtubules. As to expression, expressed in testis and ovary.

The protein resides in the cytoplasm. It localises to the cytoskeleton. The protein localises to the nucleus. Its subcellular location is the microtubule organizing center. It is found in the centrosome. The protein resides in the spindle. It localises to the cell projection. The protein localises to the growth cone. Its subcellular location is the cleavage furrow. Functionally, microtubule plus-end tracking protein that promotes the stabilization of dynamic microtubules. Required for several aspects of mitotic spindle formation including the formation of the overlapping central spindle microtubules and kinetochore attachment. Required for the incorporation of tubulin subunits at the plus ends of kinetochore microtubules during poleward microtubule flux. Acts antagonistically to Klp10A and Klp67A to maintain metaphase spindle length. Also required for guidance of CNS axons downstream of Abl. May function to identify a subset of microtubules that probe the peripheral growth cone domain, where guidance signals exert their influence on cytoskeletal organization. Also required during oogenesis for the organization of the polarized microtubule network inside the 16-cell cyst that ensures oocyte differentiation. This chain is CLIP-associating protein (chb), found in Drosophila melanogaster (Fruit fly).